The primary structure comprises 131 residues: Large ribosomal subunit protein uL22c (131 aa).

Belongs to the universal ribosomal protein uL22 family. In terms of assembly, part of the 50S ribosomal subunit.

The protein resides in the plastid. Functionally, this protein binds specifically to 23S rRNA. In terms of biological role, the globular domain of the protein is located near the polypeptide exit tunnel on the outside of the subunit, while an extended beta-hairpin is found that lines the wall of the exit tunnel in the center of the 70S ribosome. The protein is Large ribosomal subunit protein uL22c (rpl22) of Aneura mirabilis (Parasitic liverwort).